The chain runs to 213 residues: Regulatory protein RecX (213 aa).

It belongs to the RecX family.

It localises to the cytoplasm. In terms of biological role, modulates RecA activity. The protein is Regulatory protein RecX of Clostridium beijerinckii (strain ATCC 51743 / NCIMB 8052) (Clostridium acetobutylicum).